Reading from the N-terminus, the 107-residue chain is Putative nucleosome assembly protein 1-like 6 (107 aa).

It belongs to the nucleosome assembly protein (NAP) family.

This chain is Putative nucleosome assembly protein 1-like 6, found in Homo sapiens (Human).